A 499-amino-acid chain; its full sequence is Lysine--tRNA ligase (499 aa).

Mg(2+) contacts are provided by E408 and E415.

It belongs to the class-II aminoacyl-tRNA synthetase family. As to quaternary structure, homodimer. Mg(2+) is required as a cofactor.

It localises to the cytoplasm. It catalyses the reaction tRNA(Lys) + L-lysine + ATP = L-lysyl-tRNA(Lys) + AMP + diphosphate. The polypeptide is Lysine--tRNA ligase (Bacillus cereus (strain AH820)).